The following is a 295-amino-acid chain: MTKILGSDLIKRGMAQMQKGGVIMDVVSAEQARIAEAAGAVAVMALERVPSDIRAAGGVARMANTAIVREVMEAVSIPVMAKARIGHIVEARVLEAMGVDYIDESEVLTPADEKFHLLKSDYTVPFVCGCRDLGEALRRIGEGASMLRTKGEPGTGNVVEAVRHLRKVNAQLRKVINMSHDELMTEAKHLGAPFELLLQIKTLGKLPVVNFAAGGIATPADAALMMELGADGVFVGSGIFKSENPEKFAKAIVQATTHYQDYDLIARLSADLGEPMRGLEISELAVQDRMQERGW.

D25 serves as a coordination point for D-ribose 5-phosphate. K82 functions as the Schiff-base intermediate with D-ribose 5-phosphate in the catalytic mechanism. G154 lines the D-ribose 5-phosphate pocket. R166 contacts D-glyceraldehyde 3-phosphate. Residues G215 and 236-237 (GS) each bind D-ribose 5-phosphate.

It belongs to the PdxS/SNZ family. As to quaternary structure, in the presence of PdxT, forms a dodecamer of heterodimers.

It catalyses the reaction aldehydo-D-ribose 5-phosphate + D-glyceraldehyde 3-phosphate + L-glutamine = pyridoxal 5'-phosphate + L-glutamate + phosphate + 3 H2O + H(+). Its pathway is cofactor biosynthesis; pyridoxal 5'-phosphate biosynthesis. Its function is as follows. Catalyzes the formation of pyridoxal 5'-phosphate from ribose 5-phosphate (RBP), glyceraldehyde 3-phosphate (G3P) and ammonia. The ammonia is provided by the PdxT subunit. Can also use ribulose 5-phosphate and dihydroxyacetone phosphate as substrates, resulting from enzyme-catalyzed isomerization of RBP and G3P, respectively. The polypeptide is Pyridoxal 5'-phosphate synthase subunit PdxS (Actinobacillus pleuropneumoniae serotype 3 (strain JL03)).